Here is a 505-residue protein sequence, read N- to C-terminus: Glucan endo-1,3-beta-glucosidase 2 (505 aa).

The signal sequence occupies residues 1 to 20; that stretch reads MASLLHLLLLSLSLLVLASA. The N-linked (GlcNAc...) asparagine glycan is linked to Asn97. The Proton donor role is filled by Glu125. N-linked (GlcNAc...) asparagine glycosylation is found at Asn180 and Asn262. The Nucleophile role is filled by Glu272. N-linked (GlcNAc...) asparagine glycans are attached at residues Asn304, Asn361, and Asn365. A disulfide bond links Cys369 and Cys432. Residues Asn461, Asn466, and Asn473 are each glycosylated (N-linked (GlcNAc...) asparagine). Ser477 carries the GPI-anchor amidated serine lipid modification. The propeptide at 478–505 is removed in mature form; sequence SGIRSDLYYSRGIWSILTVMILNVANIL.

The protein belongs to the glycosyl hydrolase 17 family. Contains two additional disulfide bonds.

The protein localises to the cell membrane. The catalysed reaction is Hydrolysis of (1-&gt;3)-beta-D-glucosidic linkages in (1-&gt;3)-beta-D-glucans.. The chain is Glucan endo-1,3-beta-glucosidase 2 from Arabidopsis thaliana (Mouse-ear cress).